The chain runs to 390 residues: Multidrug resistance protein MdtL (390 aa).

Helical transmembrane passes span 4-24, 42-62, 69-89, 93-113, 131-151, 158-178, 199-221, 245-265, 269-289, 293-313, 316-336, and 353-375; these read FLIC…MYLV, IAFS…GKVA, PVAI…SRAT, LFLT…VVAF, LLNG…HLIM, SLFY…VFIL, LLNR…ILTF, ALTA…LSVF, TLML…SLSS, VTLF…GVAM, ALGP…IAQV, and ALNM…LMTI.

Belongs to the major facilitator superfamily. DHA1 family. MdtL (TC 2.A.1.2.22) subfamily.

Its subcellular location is the cell inner membrane. The chain is Multidrug resistance protein MdtL from Citrobacter koseri (strain ATCC BAA-895 / CDC 4225-83 / SGSC4696).